The following is a 227-amino-acid chain: PKHD-type hydroxylase Pden_4677 (227 aa).

Positions 78-178 (HILPPMFNRY…RWASFFWAQS (101 aa)) constitute a Fe2OG dioxygenase domain. 3 residues coordinate Fe cation: H96, D98, and H159. R169 serves as a coordination point for 2-oxoglutarate.

Fe(2+) is required as a cofactor. The cofactor is L-ascorbate.

This chain is PKHD-type hydroxylase Pden_4677, found in Paracoccus denitrificans (strain Pd 1222).